The chain runs to 153 residues: Neuromedin-S (153 aa).

Positions 1–26 (MKHPLPHYSPILFIYCFCMLQIPSSG) are cleaved as a signal peptide. Propeptides lie at residues 27–69 (ASPP…VYKR), 70–105 (FLFH…ASRR), and 106–108 (MKR). N144 is modified (asparagine amide). Residues 147–153 (YTDNNFQ) constitute a propeptide that is removed on maturation.

Belongs to the NmU family.

The protein resides in the secreted. In terms of biological role, implicated in the regulation of circadian rhythms through autocrine and/or paracrine actions. In Mus musculus (Mouse), this protein is Neuromedin-S (Nms).